The sequence spans 120 residues: Ribosome-binding factor A (120 aa).

It belongs to the RbfA family. As to quaternary structure, monomer. Binds 30S ribosomal subunits, but not 50S ribosomal subunits or 70S ribosomes.

It localises to the cytoplasm. Its function is as follows. One of several proteins that assist in the late maturation steps of the functional core of the 30S ribosomal subunit. Associates with free 30S ribosomal subunits (but not with 30S subunits that are part of 70S ribosomes or polysomes). Required for efficient processing of 16S rRNA. May interact with the 5'-terminal helix region of 16S rRNA. This chain is Ribosome-binding factor A, found in Chlamydia pneumoniae (Chlamydophila pneumoniae).